The chain runs to 130 residues: Snaclec B8 (130 aa).

3 disulfide bridges follow: C2/C13, C30/C124, and C99/C116. The 117-residue stretch at 9 to 125 (HEGHCYKVFK…CELAYHFICM (117 aa)) folds into the C-type lectin domain.

It belongs to the snaclec family. As to quaternary structure, heterodimer; disulfide-linked. Expressed by the venom gland.

It is found in the secreted. Interferes with one step of hemostasis (modulation of platelet aggregation, or coagulation cascade, for example). In Macrovipera lebetinus (Levantine viper), this protein is Snaclec B8.